We begin with the raw amino-acid sequence, 281 residues long: Undecaprenyl-diphosphatase (281 aa).

The next 7 membrane-spanning stretches (helical) occupy residues 45–65 (AFTN…VVVI), 86–106 (WQLW…GLIF), 114–134 (FQNF…FIYV), 148–168 (LVSL…LSLI), 196–216 (FFLG…KFIV), 224–244 (SQLF…LYVI), and 256–276 (FTFF…YGLM).

The protein belongs to the UppP family.

It is found in the cell membrane. It catalyses the reaction di-trans,octa-cis-undecaprenyl diphosphate + H2O = di-trans,octa-cis-undecaprenyl phosphate + phosphate + H(+). Catalyzes the dephosphorylation of undecaprenyl diphosphate (UPP). Confers resistance to bacitracin. This Streptococcus mutans serotype c (strain ATCC 700610 / UA159) protein is Undecaprenyl-diphosphatase.